A 432-amino-acid chain; its full sequence is Alcohol acyltransferase 9 (432 aa).

Active-site proton acceptor residues include histidine 156 and aspartate 379.

Belongs to the plant acyltransferase family. In terms of tissue distribution, expressed in fruit.

It carries out the reaction 2-(methylsulfanyl)acetyl-CoA + butan-1-ol = butyl 2-(methylsulfanyl)acetate + CoA. It catalyses the reaction ethanol + acetyl-CoA = ethyl acetate + CoA. The catalysed reaction is butan-1-ol + acetyl-CoA = butyl acetate + CoA. The enzyme catalyses butan-1-ol + propanoyl-CoA = butyl propanoate + CoA. Functionally, involved in the biosynthesis of volatile esters which confer kiwifruit flavor. Alcohol acyl transferase that can use a wide range of alcohols as substrate to produce esters. Exhibits acetyl-CoA:alcohol O-acyltransferase activity. The polypeptide is Alcohol acyltransferase 9 (Actinidia deliciosa (Kiwi)).